Reading from the N-terminus, the 153-residue chain is Ubiquitin-conjugating enzyme E2 35 (153 aa).

The region spanning 5–151 (NLPRRIIKET…AKEWTRLYAS (147 aa)) is the UBC core domain. The active-site Glycyl thioester intermediate is the Cys-89.

This sequence belongs to the ubiquitin-conjugating enzyme family. In terms of assembly, interacts with yeast and human Mms2, with the RING domain of RGLG2 and with UEV1A, UEV1B, UEV1C and UEV1D. As to expression, ubiquitously expressed at low level. Mainly expressed in the vasculature.

The enzyme catalyses S-ubiquitinyl-[E1 ubiquitin-activating enzyme]-L-cysteine + [E2 ubiquitin-conjugating enzyme]-L-cysteine = [E1 ubiquitin-activating enzyme]-L-cysteine + S-ubiquitinyl-[E2 ubiquitin-conjugating enzyme]-L-cysteine.. It participates in protein modification; protein ubiquitination. Catalyzes the synthesis of non-canonical poly-ubiquitin chains that are linked through 'Lys-63'. This type of poly-ubiquitination does not lead to protein degradation by the proteasome. Mediates transcriptional activation of target genes. Required for postreplication repair of UV-damaged DNA and for adapting root developmental programs to suboptimal availability of iron. The chain is Ubiquitin-conjugating enzyme E2 35 (UBC35) from Arabidopsis thaliana (Mouse-ear cress).